We begin with the raw amino-acid sequence, 616 residues long: Zinc metalloproteinase-disintegrin-like protein H3 (616 aa).

The signal sequence occupies residues Met1–Ser20. A propeptide spanning residues Ile21 to Pro193 is cleaved from the precursor. Position 194 is a pyrrolidone carboxylic acid (Glu) (Glu194). Residues Lys203 to Pro399 enclose the Peptidase M12B domain. Disulfide bonds link Cys314/Cys394, Cys354/Cys378, and Cys356/Cys361. A Zn(2+)-binding site is contributed by His339. The short motif at His339–Asp350 is the Metal-binding element. The Proton acceptor role is filled by Glu340. Residues His343 and His349 each contribute to the Zn(2+) site. A glycan (N-linked (GlcNAc...) asparagine) is linked at Asn377. Residues Pro407–Asn493 enclose the Disintegrin domain. Ca(2+) is bound by residues Val409, Asn412, Glu416, Glu419, and Asp422. 14 disulfides stabilise this stretch: Cys410/Cys439, Cys421/Cys434, Cys423/Cys429, Cys433/Cys456, Cys447/Cys453, Cys452/Cys478, Cys465/Cys485, Cys472/Cys504, Cys497/Cys509, Cys516/Cys566, Cys531/Cys577, Cys544/Cys554, Cys561/Cys603, and Cys597/Cys609. The short motif at Glu471–Asp473 is the D/ECD-tripeptide element. Ca(2+)-binding residues include Asp473, Asp476, and Asp488. Asn506 carries an N-linked (GlcNAc...) asparagine glycan.

Belongs to the venom metalloproteinase (M12B) family. P-III subfamily. P-IIIc sub-subfamily. In terms of assembly, homodimer; disulfide-linked. The cofactor is Zn(2+). Post-translationally, N-glycosylated. The N-terminus is blocked. As to expression, expressed by the venom gland (at protein level). Expressed by the venom gland.

It is found in the secreted. With respect to regulation, the proteolytic activity requires Zn(2+) and Ca(2+) ions. The alpha-fibrinogenase activity is completely inhibited by EDTA, but not by PMSF. Its function is as follows. Zinc metalloprotease that has fibrinogenolytic and hemorrhagic activities. Cleaves insulin B chain readily at '38-Ala-|-Leu-39' bond, and at a significantly slower rate, at '40-Tyr-|-Leu-41' bond. Hydrolyzes isolated extracellular matrix (ECM) bovine fibronectin, and basal membrane (BM) proteins human collagen IV and, to a lesser extent, murine laminin, in vitro. Cleaves murine nidogen (at '350-Ser-|-Phe-351' and '380-Tyr-|-Asn-381' bonds), but not laminin, in a solubilized BM preparation. Hydrolyzes plasma proteins involved in blood coagulation in vitro. It significantly prolongs thrombin time. Has potent alpha-fibrinogenase activity cleaving human fibrinogen alpha chain at '432-Lys-|-Leu-433' bond, but does not cleave beta or gamma chains. Hydrolyzes bovine prothrombin, but does not cleave it at '366-Arg-|-Ile-367' bond, which is necessary for the formation of active alpha-thrombin, however, the cleavage of fragment 1 from it leads to reduced alpha-thrombin formation. Hydrolyzes bovine factor X heavy chain at '211-Ser-|-Leu-212', '213-Asp-|-Leu-214' and '216-Gly-|-Leu-217' bonds activating it only marginally as does not cleave at the physiological activation site. Does not cleave factor X light chain. No hydrolysis or activation of plasminogen. The alpha-fibrinogenase activity likely contributes to its hemorrhagic activity, which in rat can be completely neutralized in vivo by anti-ammodytagin antibodies, which strongly cross-react with this protein. Has very weak collagen-, ADP- and ristocetin-induced platelet aggregation inhibition activity in vitro. The polypeptide is Zinc metalloproteinase-disintegrin-like protein H3 (Vipera ammodytes ammodytes (Western sand viper)).